The chain runs to 597 residues: MVEGRRRRRFSLSSQQLALLLLLLSFFLCFSVASPRAISDSDLLDETVANSSSSVASLNASSSSSLVKPKEGSFADIIDRALEKEFNESDQNEVADPGSFNNSVAGQQAVLETVARVKSTKKNETKEEKRFQLHDVFNLNNDNRAEDTPTLIDRKDNVFIISNSKSKYPVLQLDLRLISDLVVVIVSATCGGIAFACAGQPVITGYLLAGSIIGPGGLNFISEMVQVETVAQFGVVFLLFALGLEFSTAKLKVVRSVAVLGGLLQILLFMFLCGITVSLCGGKRSEGVFVGAFLSMSSTAVVLKFLMEKNSTNSLHGQVTIGILILQDCAVGLLFALLPVLEGNSGIVHGMLSIGKVVVLLLSFLAVLSILSRTCIPWLLKLMVSLSSQTNELYQLAAVAFCLLVAWCSDKLGLSLELGSFAAGVMISTTDLAEHTLEQIEPIRNLFAALFLASIGMLVNVHFLWTHVDILLASVILVIIIKTTIVTTVVKGFGYNNKTALLVGISLAQIGEFAFVLLSRASNLHLIEGKLYLLLLGTTALSLVTTPLVFKMIPAVVHLGILLKWFSPDSTIEKGEIVRSESGKQRMILMSRQSHSS.

The N-terminal stretch at 1–35 (MVEGRRRRRFSLSSQQLALLLLLLSFFLCFSVASP) is a signal peptide. 12 consecutive transmembrane segments (helical) span residues 177 to 197 (LISD…AFAC), 201 to 221 (PVIT…LNFI), 224 to 244 (MVQV…ALGL), 257 to 277 (VAVL…GITV), 287 to 307 (GVFV…KFLM), 321 to 341 (IGIL…LPVL), 351 to 371 (MLSI…LSIL), 396 to 416 (LAAV…GLSL), 440 to 460 (IEPI…MLVN), 461 to 481 (VHFL…VIII), 499 to 519 (TALL…VLLS), and 543 to 563 (LVTT…GILL).

This sequence belongs to the monovalent cation:proton antiporter 2 (CPA2) transporter (TC 2.A.37) family. KEA (TC 2.A.37.1) subfamily. Expressed in roots, stems, leaves, flowers and silique.

The protein localises to the golgi apparatus membrane. Its subcellular location is the golgi apparatus. The protein resides in the trans-Golgi network membrane. It localises to the prevacuolar compartment membrane. It is found in the endomembrane system. The catalysed reaction is K(+)(in) + H(+)(out) = K(+)(out) + H(+)(in). In terms of biological role, electroneutral K(+)/H(+) efflux antiporter involved in K(+) homeostasis and osmotic adjustment. Together with KEA4 and KEA5, promotes growth and development, and facilitates endosomal pH and ions homeostasis, as well as salt tolerance (e.g. K(+), NaCl and LiCl), probably by supporting cell wall biosynthesis during rapid etiolated seedling growth. The polypeptide is K(+) efflux antiporter 6 (Arabidopsis thaliana (Mouse-ear cress)).